The sequence spans 444 residues: 4-O-dimethylallyl-L-tyrosine synthase (444 aa).

Belongs to the tryptophan dimethylallyltransferase family. As to quaternary structure, homodimer.

It catalyses the reaction L-tyrosine + dimethylallyl diphosphate = 4-O-dimethylallyl-L-tyrosine + diphosphate. 4-O-dimethylallyl-L-tyrosine synthase; part of the gene cluster that mediates the biosynthesis of an unusual class of epipolythiodioxopiperazines (ETPs) lacking the reactive thiol group important for toxicity. Firstly, L-tyrosine is prenylated by tcpD, before undergoing condensation with L-glycine in a reaction catalyzed by the NRPS tcpP leading to the diketopiperazine (DKP) backbone. Afterwards the alpha-carbon of tyrosine is oxidized by the cytochrome P450 tcpC to form a hydroxyl group. However, in contrast other ETP biosynthesis pathways studied so far, tcpC is not able to bishydroxylate the DKP at both alpha-carbon positions, but hydroxylates the alpha-carbon of the tyrosine part and the nitrogen of the glycine part. The next steps involve an alpha,beta-elimination reaction catalyzed by tcpI, a methylation by the methyltransferase tcpN the action of the four enzyme cascade tcpG/K/J/I. Due to a dysfunctional cytochrome P450 monooxygenase tcpC, the pathway leads to the biosynthesis of probable non-toxic metabolites lacking the reactive thiol group. The protein is 4-O-dimethylallyl-L-tyrosine synthase of Claviceps purpurea (strain 20.1) (Ergot fungus).